The sequence spans 74 residues: U4-theraphotoxin-Cg1a (74 aa).

The N-terminal stretch at 1–19 is a signal peptide; the sequence is MNATIFALLLLLNLAMHNA. Positions 20–39 are excised as a propeptide; that stretch reads AEQSSETDMDDTLLIPEINR. Intrachain disulfides connect cysteine 42–cysteine 56, cysteine 49–cysteine 61, and cysteine 55–cysteine 71.

This sequence belongs to the neurotoxin 36 family. 01 subfamily. As to expression, expressed by the venom gland.

It localises to the secreted. In terms of biological role, probable ion channel inhibitor. The sequence is that of U4-theraphotoxin-Cg1a from Chilobrachys guangxiensis (Chinese earth tiger tarantula).